We begin with the raw amino-acid sequence, 165 residues long: Small ribosomal subunit protein uS17m (165 aa).

It belongs to the universal ribosomal protein uS17 family. Component of the mitochondrial small ribosomal subunit (mt-SSU). Mature N.crassa 74S mitochondrial ribosomes consist of a small (37S) and a large (54S) subunit. The 37S small subunit contains a 16S ribosomal RNA (16S mt-rRNA) and 32 different proteins. The 54S large subunit contains a 23S rRNA (23S mt-rRNA) and 42 different proteins. uS17m interacts with the F(1)-ATPase inhibitor IF(1) dimer.

Its subcellular location is the mitochondrion. Functionally, component of the mitochondrial ribosome (mitoribosome), a dedicated translation machinery responsible for the synthesis of mitochondrial genome-encoded proteins, including at least some of the essential transmembrane subunits of the mitochondrial respiratory chain. The mitoribosomes are attached to the mitochondrial inner membrane and translation products are cotranslationally integrated into the membrane. The chain is Small ribosomal subunit protein uS17m (mrps17) from Neurospora crassa (strain ATCC 24698 / 74-OR23-1A / CBS 708.71 / DSM 1257 / FGSC 987).